Here is a 680-residue protein sequence, read N- to C-terminus: Zinc finger protein 263 (680 aa).

Lysine 19 participates in a covalent cross-link: Glycyl lysine isopeptide (Lys-Gly) (interchain with G-Cter in SUMO2). In terms of domain architecture, SCAN box spans histidine 43–leucine 125. The interval leucine 147–arginine 191 is disordered. A Glycyl lysine isopeptide (Lys-Gly) (interchain with G-Cter in SUMO2) cross-link involves residue lysine 159. A phosphoserine mark is found at serine 168 and serine 180. Residues lysine 286, lysine 300, and lysine 376 each participate in a glycyl lysine isopeptide (Lys-Gly) (interchain with G-Cter in SUMO2) cross-link. 5 C2H2-type zinc fingers span residues histidine 378–histidine 400, histidine 434–histidine 456, phenylalanine 462–histidine 484, tyrosine 490–histidine 512, and tyrosine 518–histidine 540. Glycyl lysine isopeptide (Lys-Gly) (interchain with G-Cter in SUMO2) cross-links involve residues lysine 570 and lysine 579. 4 consecutive C2H2-type zinc fingers follow at residues phenylalanine 572–histidine 594, tyrosine 600–histidine 622, tyrosine 628–histidine 650, and tyrosine 656–histidine 678.

It belongs to the krueppel C2H2-type zinc-finger protein family. Interacts with a number of proteins involved in chromatin modification and transcriptional corepression including DNMT1, DNMT3A, HDAC2, PHF8, TRIM28/KAP1, SETDB1, EZH2, UHRF1, CBX3/HP1-gamma, and CBX5/HP1-alpha; recruits these proteins to the SIX3 promoter region, leading to SIX3 transcriptional repression. Interacts with MAPK3/ERK1 and MAPK1/ERK2. Post-translationally, ubiquitinated, leading to proteasomal degradation. Expressed in Purkinje cells in the brain (at protein level).

It is found in the nucleus. Transcription factor that binds to the consensus sequence 5'-TCCTCCC-3' and acts as a transcriptional repressor. Binds to the promoter region of SIX3 and recruits other proteins involved in chromatin modification and transcriptional corepression, resulting in methylation of the promoter and transcriptional repression. Acts as a transcriptional repressor of HS3ST1 and HS3ST3A1 via binding to gene promoter regions. The protein is Zinc finger protein 263 of Mus musculus (Mouse).